A 495-amino-acid chain; its full sequence is ATP synthase subunit beta, chloroplastic (495 aa).

172–179 (GGAGVGKT) is an ATP binding site.

Belongs to the ATPase alpha/beta chains family. F-type ATPases have 2 components, CF(1) - the catalytic core - and CF(0) - the membrane proton channel. CF(1) has five subunits: alpha(3), beta(3), gamma(1), delta(1), epsilon(1). CF(0) has four main subunits: a(1), b(1), b'(1) and c(9-12).

Its subcellular location is the plastid. The protein resides in the chloroplast thylakoid membrane. It carries out the reaction ATP + H2O + 4 H(+)(in) = ADP + phosphate + 5 H(+)(out). Produces ATP from ADP in the presence of a proton gradient across the membrane. The catalytic sites are hosted primarily by the beta subunits. In Beaucarnea recurvata (Elephant-foot tree), this protein is ATP synthase subunit beta, chloroplastic.